The following is a 221-amino-acid chain: UPF0758 protein HI_0952 (221 aa).

The region spanning 99-221 (IINDPETVKL…CYSFAENCLL (123 aa)) is the MPN domain. The Zn(2+) site is built by histidine 170, histidine 172, and aspartate 183. Residues 170 to 183 (HNHPSGITEPSYSD) carry the JAMM motif motif.

This sequence belongs to the UPF0758 family.

The protein is UPF0758 protein HI_0952 of Haemophilus influenzae (strain ATCC 51907 / DSM 11121 / KW20 / Rd).